Consider the following 271-residue polypeptide: OX-2 membrane glycoprotein homolog (271 aa).

Positions 1 to 24 are cleaved as a signal peptide; that stretch reads MSSLFISLPWVAFIWLALLGAVGG. At 25–227 the chain is on the extracellular side; the sequence is ARVQGPMRGS…QGPLAHDLPA (203 aa). One can recognise an Ig-like V-type domain in the interval 26–129; the sequence is RVQGPMRGSA…SCTACLEVTS (104 aa). Residues C39 and C109 are joined by a disulfide bond. N83, N91, N138, N157, N166, and N208 each carry an N-linked (GlcNAc...) asparagine; by host glycan. The 91-residue stretch at 130–220 folds into the Ig-like C2-type domain; sequence PPTGHVQVNS…ISIPASIQGP (91 aa). A disulfide bridge connects residues C148 and C202. Residues 228 to 248 form a helical membrane-spanning segment; it reads AQGTLAGVAITLVGLFGIFAL. At 249-271 the chain is on the cytoplasmic side; that stretch reads HHCRRKQGGASPTSDDMDPLSTQ.

Interacts with human CD200R1. Post-translationally, N-glycosylated.

Its subcellular location is the host cell membrane. Functionally, dramatically stimulates primary monocytes, macrophages, and dendritic cells to produce the inflammatory cytokines interleukin 1-beta, IL-6, monocyte chemoattractant protein 1, and TNF-alpha. The induction of inflammatory cytokine production potentially promotes the cytokine-mediated angiogenic proliferation of KSHV-infected cells. The chain is OX-2 membrane glycoprotein homolog (K14) from Human herpesvirus 8 type P (isolate GK18) (HHV-8).